The primary structure comprises 189 residues: Dual specificity phosphatase 29 (189 aa).

A Tyrosine-protein phosphatase domain is found at 33-182; sequence HVNEVWPGVY…LRELDTHLQE (150 aa). Substrate is bound at residue 126–133; it reads HCVMGRSR. The active-site Phosphocysteine intermediate is C127.

This sequence belongs to the protein-tyrosine phosphatase family. Non-receptor class dual specificity subfamily.

It is found in the cytoplasm. The protein localises to the nucleus. It catalyses the reaction O-phospho-L-tyrosyl-[protein] + H2O = L-tyrosyl-[protein] + phosphate. The enzyme catalyses O-phospho-L-seryl-[protein] + H2O = L-seryl-[protein] + phosphate. The catalysed reaction is O-phospho-L-threonyl-[protein] + H2O = L-threonyl-[protein] + phosphate. In terms of biological role, dual specificity phosphatase able to dephosphorylate phosphotyrosine, phosphoserine and phosphothreonine residues within the same substrate, with a preference for phosphotyrosine as a substrate. Involved in the modulation of AMPK and MAPK1/2 signaling pathways. This is Dual specificity phosphatase 29 (dusp29) from Danio rerio (Zebrafish).